Here is a 66-residue protein sequence, read N- to C-terminus: uncharacterized protein (66 aa).

Residues Met1–Ser18 are compositionally biased toward low complexity. The interval Met1–Thr22 is disordered.

This is an uncharacterized protein from Schizosaccharomyces pombe (strain 972 / ATCC 24843) (Fission yeast).